The primary structure comprises 525 residues: GMP synthase [glutamine-hydrolyzing] (525 aa).

Residues 9 to 207 enclose the Glutamine amidotransferase type-1 domain; it reads RILILDFGSQ…VRDICQCEAL (199 aa). Catalysis depends on cysteine 86, which acts as the Nucleophile. Residues histidine 181 and glutamate 183 contribute to the active site. The GMPS ATP-PPase domain maps to 208 to 400; it reads WTPAKIIDDA…LGLPYDMLYR (193 aa). Residue 235 to 241 participates in ATP binding; the sequence is SGGVDSS.

As to quaternary structure, homodimer.

The enzyme catalyses XMP + L-glutamine + ATP + H2O = GMP + L-glutamate + AMP + diphosphate + 2 H(+). It participates in purine metabolism; GMP biosynthesis; GMP from XMP (L-Gln route): step 1/1. Catalyzes the synthesis of GMP from XMP. The protein is GMP synthase [glutamine-hydrolyzing] of Shigella boydii serotype 4 (strain Sb227).